Here is a 522-residue protein sequence, read N- to C-terminus: Tryptophan 2-halogenase (522 aa).

FAD is bound by residues A17, E36, R42, H44, I45, S48, R103, I127, and D296. The chloride site is built by S307 and G308. V309 contributes to the FAD binding site.

The protein belongs to the flavin-dependent halogenase family.

Functionally, involved in the incorporation of a chlorinated tryptophan residue into halogenated forms of the secondary metabolites called chondramides. The polypeptide is Tryptophan 2-halogenase (Chondromyces crocatus).